The chain runs to 193 residues: Ribonuclease HII (193 aa).

The 193-residue stretch at 1–193 folds into the RNase H type-2 domain; it reads MTLGIDEAGR…SFALKNNWFS (193 aa). The a divalent metal cation site is built by aspartate 6, glutamate 7, and aspartate 103.

Belongs to the RNase HII family. Mn(2+) is required as a cofactor. Mg(2+) serves as cofactor.

It is found in the cytoplasm. The catalysed reaction is Endonucleolytic cleavage to 5'-phosphomonoester.. Its function is as follows. Endonuclease that specifically degrades the RNA of RNA-DNA hybrids. This chain is Ribonuclease HII, found in Helicobacter acinonychis (strain Sheeba).